A 422-amino-acid polypeptide reads, in one-letter code: Phospho-N-acetylmuramoyl-pentapeptide-transferase (422 aa).

9 helical membrane-spanning segments follow: residues leucine 28–leucine 48, valine 71–leucine 91, leucine 95–phenylalanine 115, isoleucine 136–valine 156, alanine 208–serine 228, glycine 239–serine 259, leucine 279–phenylalanine 299, isoleucine 313–leucine 333, and lysine 399–leucine 419.

Belongs to the glycosyltransferase 4 family. MraY subfamily. The cofactor is Mg(2+).

It localises to the cell inner membrane. The enzyme catalyses UDP-N-acetyl-alpha-D-muramoyl-L-alanyl-gamma-D-glutamyl-meso-2,6-diaminopimeloyl-D-alanyl-D-alanine + di-trans,octa-cis-undecaprenyl phosphate = di-trans,octa-cis-undecaprenyl diphospho-N-acetyl-alpha-D-muramoyl-L-alanyl-D-glutamyl-meso-2,6-diaminopimeloyl-D-alanyl-D-alanine + UMP. It participates in cell wall biogenesis; peptidoglycan biosynthesis. Functionally, catalyzes the initial step of the lipid cycle reactions in the biosynthesis of the cell wall peptidoglycan: transfers peptidoglycan precursor phospho-MurNAc-pentapeptide from UDP-MurNAc-pentapeptide onto the lipid carrier undecaprenyl phosphate, yielding undecaprenyl-pyrophosphoryl-MurNAc-pentapeptide, known as lipid I. The chain is Phospho-N-acetylmuramoyl-pentapeptide-transferase from Phocaeicola vulgatus (strain ATCC 8482 / DSM 1447 / JCM 5826 / CCUG 4940 / NBRC 14291 / NCTC 11154) (Bacteroides vulgatus).